A 71-amino-acid chain; its full sequence is Large ribosomal subunit protein bL31 (71 aa).

Cysteine 16, cysteine 18, cysteine 38, and cysteine 41 together coordinate Zn(2+).

It belongs to the bacterial ribosomal protein bL31 family. Type A subfamily. Part of the 50S ribosomal subunit. Zn(2+) serves as cofactor.

Binds the 23S rRNA. In Neisseria meningitidis serogroup A / serotype 4A (strain DSM 15465 / Z2491), this protein is Large ribosomal subunit protein bL31.